The primary structure comprises 255 residues: Pimeloyl-[acyl-carrier protein] methyl ester esterase (255 aa).

The 227-residue stretch at 16–242 (LVLLHGWGLN…AAHAPFISHP (227 aa)) folds into the AB hydrolase-1 domain. Substrate contacts are provided by residues Trp-22, 82–83 (SL), and 143–147 (FLALQ). Ser-82 acts as the Nucleophile in catalysis. Residues Asp-207 and His-235 contribute to the active site. His-235 serves as a coordination point for substrate.

Belongs to the AB hydrolase superfamily. Carboxylesterase BioH family. As to quaternary structure, monomer.

Its subcellular location is the cytoplasm. It catalyses the reaction 6-carboxyhexanoyl-[ACP] methyl ester + H2O = 6-carboxyhexanoyl-[ACP] + methanol + H(+). The protein operates within cofactor biosynthesis; biotin biosynthesis. Functionally, the physiological role of BioH is to remove the methyl group introduced by BioC when the pimeloyl moiety is complete. It allows to synthesize pimeloyl-ACP via the fatty acid synthetic pathway through the hydrolysis of the ester bonds of pimeloyl-ACP esters. This chain is Pimeloyl-[acyl-carrier protein] methyl ester esterase, found in Pectobacterium carotovorum subsp. carotovorum (strain PC1).